Consider the following 160-residue polypeptide: Cytochrome b6-f complex subunit 4 (160 aa).

Helical transmembrane passes span 36-56, 95-115, and 127-147; these read ILYMFPVVILGILACDVGLSI, LVGVLSMASVPAGLITVPFIE, and PIATSVFLVGTIVAVWLGIGA.

The protein belongs to the cytochrome b family. PetD subfamily. The 4 large subunits of the cytochrome b6-f complex are cytochrome b6, subunit IV (17 kDa polypeptide, petD), cytochrome f and the Rieske protein, while the 4 small subunits are petG, petL, petM and petN. The complex functions as a dimer.

The protein localises to the plastid. Its subcellular location is the chloroplast thylakoid membrane. Its function is as follows. Component of the cytochrome b6-f complex, which mediates electron transfer between photosystem II (PSII) and photosystem I (PSI), cyclic electron flow around PSI, and state transitions. The sequence is that of Cytochrome b6-f complex subunit 4 from Gracilaria tenuistipitata var. liui (Red alga).